The chain runs to 431 residues: uncharacterized protein (431 aa).

4Fe-4S ferredoxin-type domains follow at residues 336–367 (VRPV…NGLD) and 362–391 (IDNG…MDTG).

This is an uncharacterized protein from Methanothermobacter thermautotrophicus (strain ATCC 29096 / DSM 1053 / JCM 10044 / NBRC 100330 / Delta H) (Methanobacterium thermoautotrophicum).